Here is a 220-residue protein sequence, read N- to C-terminus: CASP-like protein 1E1 (220 aa).

At 1-57 (METPTPRVKPGFNGVGVGMGSSVNGSSRRAGYYMGPAGAVAVAGGGRAAAAAPVDGC) the chain is on the cytoplasmic side. Residues 58-78 (SVALRVFVLAATLVSAVVMGV) form a helical membrane-spanning segment. Residues 79-108 (DRQTSTIRITVTDALPPLEVPLTANWSYSS) lie on the Extracellular side of the membrane. Asn-103 carries N-linked (GlcNAc...) asparagine glycosylation. A helical membrane pass occupies residues 109–129 (AFVYFVVANAMVCLFSAAALA). The Cytoplasmic portion of the chain corresponds to 130-144 (ACRSRAAMVPVMVGD). Residues 145–165 (LLALALLYSAVGAAAEFGILG) traverse the membrane as a helical segment. The Extracellular portion of the chain corresponds to 166–187 (ERGNSHVRWPKVCNVYGRFCER). A helical membrane pass occupies residues 188 to 208 (AMAAVIVSLIAAFANLVLLML). Residues 209-220 (NILTIHKSSSYY) lie on the Cytoplasmic side of the membrane.

This sequence belongs to the Casparian strip membrane proteins (CASP) family. As to quaternary structure, homodimer and heterodimers.

The protein localises to the cell membrane. The protein is CASP-like protein 1E1 of Zea mays (Maize).